The sequence spans 216 residues: 7-carboxy-7-deazaguanine synthase (216 aa).

Residues 12-14 (LQG) and Arg27 contribute to the substrate site. The Radical SAM core domain maps to 18 to 216 (RAGRAAVFCR…LQTHKYLGIP (199 aa)). Residues Cys31, Cys46, and Cys49 each contribute to the [4Fe-4S] cluster site. A Mg(2+)-binding site is contributed by Thr51. Thr93 is a substrate binding site. Residues Gly95, 136-138 (SPK), and 176-179 (QPRD) contribute to the S-adenosyl-L-methionine site. A substrate-binding site is contributed by Pro216.

This sequence belongs to the radical SAM superfamily. 7-carboxy-7-deazaguanine synthase family. Homodimer. Requires [4Fe-4S] cluster as cofactor. S-adenosyl-L-methionine serves as cofactor. It depends on Mg(2+) as a cofactor.

It catalyses the reaction 6-carboxy-5,6,7,8-tetrahydropterin + H(+) = 7-carboxy-7-deazaguanine + NH4(+). It participates in purine metabolism; 7-cyano-7-deazaguanine biosynthesis. Its function is as follows. Catalyzes the complex heterocyclic radical-mediated conversion of 6-carboxy-5,6,7,8-tetrahydropterin (CPH4) to 7-carboxy-7-deazaguanine (CDG), a step common to the biosynthetic pathways of all 7-deazapurine-containing compounds. This is 7-carboxy-7-deazaguanine synthase from Nitratidesulfovibrio vulgaris (strain ATCC 29579 / DSM 644 / CCUG 34227 / NCIMB 8303 / VKM B-1760 / Hildenborough) (Desulfovibrio vulgaris).